A 330-amino-acid polypeptide reads, in one-letter code: Phosphate acyltransferase (330 aa).

Belongs to the PlsX family. In terms of assembly, homodimer. Probably interacts with PlsY.

The protein localises to the cytoplasm. It carries out the reaction a fatty acyl-[ACP] + phosphate = an acyl phosphate + holo-[ACP]. It participates in lipid metabolism; phospholipid metabolism. In terms of biological role, catalyzes the reversible formation of acyl-phosphate (acyl-PO(4)) from acyl-[acyl-carrier-protein] (acyl-ACP). This enzyme utilizes acyl-ACP as fatty acyl donor, but not acyl-CoA. In Lactobacillus delbrueckii subsp. bulgaricus (strain ATCC BAA-365 / Lb-18), this protein is Phosphate acyltransferase.